Here is a 184-residue protein sequence, read N- to C-terminus: MKRIVTLVSREQAEVGHRFRVFGIPDECRECRLYSVCLGRLTPGRSYIVVEVRPSMGQKCKITGGEMVPVVVEETPIVGLLPLNKALEGVVVTYEDECAGCDGCPSNMVSKGEKIKVVKVLGRAKCRGREFAIVEFYALGAPSLSGASSAGISQAPSRVPLSKPPSKSPSPQKSSPRGPTSRLP.

The span at 146 to 161 (GASSAGISQAPSRVPL) shows a compositional bias: low complexity. The segment at 146–184 (GASSAGISQAPSRVPLSKPPSKSPSPQKSSPRGPTSRLP) is disordered.

Belongs to the UPF0179 family.

In Pyrobaculum calidifontis (strain DSM 21063 / JCM 11548 / VA1), this protein is UPF0179 protein Pcal_2106.